The sequence spans 141 residues: HTH-type transcriptional repressor NsrR (141 aa).

Residues 2–129 (QLTSFTDYGL…DNYTLADLVE (128 aa)) enclose the HTH rrf2-type domain. The H-T-H motif DNA-binding region spans 28 to 51 (ISEVTEVYGVSRNHMVKIINQLSR). [2Fe-2S] cluster contacts are provided by Cys91, Cys96, and Cys102.

[2Fe-2S] cluster is required as a cofactor.

Functionally, nitric oxide-sensitive repressor of genes involved in protecting the cell against nitrosative stress. May require iron for activity. The sequence is that of HTH-type transcriptional repressor NsrR from Salmonella choleraesuis (strain SC-B67).